We begin with the raw amino-acid sequence, 780 residues long: LPS-assembly protein LptD (780 aa).

Positions 1 to 24 are cleaved as a signal peptide; it reads MKKRLPTLLASLIGSALYSQQALA.

It belongs to the LptD family. In terms of assembly, component of the lipopolysaccharide transport and assembly complex. Interacts with LptE and LptA.

The protein resides in the cell outer membrane. Together with LptE, is involved in the assembly of lipopolysaccharide (LPS) at the surface of the outer membrane. This Sodalis glossinidius (strain morsitans) protein is LPS-assembly protein LptD.